The chain runs to 150 residues: Ribonuclease H (150 aa).

Positions 1-141 (MKSIEVHTDG…VDVLARNQAI (141 aa)) constitute an RNase H type-1 domain. D9, E47, D69, and D133 together coordinate Mg(2+).

The protein belongs to the RNase H family. As to quaternary structure, monomer. It depends on Mg(2+) as a cofactor.

It localises to the cytoplasm. It carries out the reaction Endonucleolytic cleavage to 5'-phosphomonoester.. Its function is as follows. Endonuclease that specifically degrades the RNA of RNA-DNA hybrids. The sequence is that of Ribonuclease H from Xanthomonas axonopodis pv. citri (strain 306).